Here is a 330-residue protein sequence, read N- to C-terminus: NADH-quinone oxidoreductase subunit H (330 aa).

A run of 9 helical transmembrane segments spans residues 5 to 25, 44 to 64, 78 to 98, 122 to 142, 156 to 176, 192 to 212, 240 to 260, 271 to 293, and 310 to 330; these read LFFIIETFIKAVVILAVIACL, IGPDMVGPVGVLQIVADMIKL, FIFLIAPLISAIAAFAALAPI, VLYVMGVASVCVFSPLMAGLA, VMGLISFEVVSGLALLSVIMI, IFGWFVFKQPLAFVLFLMASF, MRWAMFFIGEYANMIASSIVI, FWFVPGGLMMIFKASCVFFFFLW, and CWKILLPLALVNVLITGIALI.

Belongs to the complex I subunit 1 family. NDH-1 is composed of 14 different subunits. Subunits NuoA, H, J, K, L, M, N constitute the membrane sector of the complex.

Its subcellular location is the cell inner membrane. The enzyme catalyses a quinone + NADH + 5 H(+)(in) = a quinol + NAD(+) + 4 H(+)(out). Its function is as follows. NDH-1 shuttles electrons from NADH, via FMN and iron-sulfur (Fe-S) centers, to quinones in the respiratory chain. The immediate electron acceptor for the enzyme in this species is believed to be ubiquinone. Couples the redox reaction to proton translocation (for every two electrons transferred, four hydrogen ions are translocated across the cytoplasmic membrane), and thus conserves the redox energy in a proton gradient. This subunit may bind ubiquinone. This is NADH-quinone oxidoreductase subunit H from Campylobacter curvus (strain 525.92).